Here is a 109-residue protein sequence, read N- to C-terminus: N-alpha-acetyltransferase 38, NatC auxiliary subunit (109 aa).

Positions 23–101 (LARCKLENLL…VVSIEVETES (79 aa)) constitute a Sm domain.

Belongs to the snRNP Sm proteins family. Component of the N-terminal acetyltransferase C (NatC) complex.

It localises to the cytoplasm. Its subcellular location is the nucleus. Its function is as follows. Auxillary component of the N-terminal acetyltransferase C (NatC) complex which catalyzes acetylation of N-terminal methionine residues. N-terminal acetylation protects proteins from ubiquitination and degradation by the N-end rule pathway. The chain is N-alpha-acetyltransferase 38, NatC auxiliary subunit (naa38) from Danio rerio (Zebrafish).